Consider the following 79-residue polypeptide: MORN repeat-containing protein 2 (79 aa).

MORN repeat units lie at residues 15 to 37 (YEGHFKDNMFHGLGTYTFPNGAK) and 38 to 60 (YTGNFNENRVEGEGQYTDIQGLE).

The sequence is that of MORN repeat-containing protein 2 (MORN2) from Bos taurus (Bovine).